Reading from the N-terminus, the 214-residue chain is MKVRDLMDKNFAKIYVDETVEDAINLLKKKKRFSAPIVDKEDRLVGWVTTLELLGISEKDFKKPITEFMRPVEEVITVYEDDEARNVVLKFVKYKVVSIPVLTRDGRVIGMVRNCDVVKTLAKLYEIPVYKIFKELHNHIGDISWEELMEAAAVVTKRMTGEDITPQEYEERIKKTTFGKAIWACGGLEKFFVGLIEIGMVALARKLAKRRKGG.

CBS domains lie at 7 to 65 (MDKN…KKPI) and 69 to 129 (MRPV…EIPV).

This is an uncharacterized protein from Methanocaldococcus jannaschii (strain ATCC 43067 / DSM 2661 / JAL-1 / JCM 10045 / NBRC 100440) (Methanococcus jannaschii).